Reading from the N-terminus, the 536-residue chain is Membrane protein insertase YidC (536 aa).

A run of 5 helical transmembrane segments spans residues 7–27 (LLVM…QQDF), 332–352 (FWLL…IMGV), 411–431 (MGGC…YWTF), 449–469 (LSAQ…MFLL), and 488–508 (FMPV…VLYW).

It belongs to the OXA1/ALB3/YidC family. Type 1 subfamily. In terms of assembly, interacts with the Sec translocase complex via SecD. Specifically interacts with transmembrane segments of nascent integral membrane proteins during membrane integration.

The protein resides in the cell inner membrane. Required for the insertion and/or proper folding and/or complex formation of integral membrane proteins into the membrane. Involved in integration of membrane proteins that insert both dependently and independently of the Sec translocase complex, as well as at least some lipoproteins. Aids folding of multispanning membrane proteins. The protein is Membrane protein insertase YidC of Haemophilus ducreyi (strain 35000HP / ATCC 700724).